The sequence spans 617 residues: Proline--tRNA ligase (617 aa).

This sequence belongs to the class-II aminoacyl-tRNA synthetase family. ProS type 1 subfamily. As to quaternary structure, homodimer.

The protein resides in the cytoplasm. It carries out the reaction tRNA(Pro) + L-proline + ATP = L-prolyl-tRNA(Pro) + AMP + diphosphate. Functionally, catalyzes the attachment of proline to tRNA(Pro) in a two-step reaction: proline is first activated by ATP to form Pro-AMP and then transferred to the acceptor end of tRNA(Pro). As ProRS can inadvertently accommodate and process non-cognate amino acids such as alanine and cysteine, to avoid such errors it has two additional distinct editing activities against alanine. One activity is designated as 'pretransfer' editing and involves the tRNA(Pro)-independent hydrolysis of activated Ala-AMP. The other activity is designated 'posttransfer' editing and involves deacylation of mischarged Ala-tRNA(Pro). The misacylated Cys-tRNA(Pro) is not edited by ProRS. The polypeptide is Proline--tRNA ligase (Streptococcus agalactiae serotype Ia (strain ATCC 27591 / A909 / CDC SS700)).